The following is a 2415-amino-acid chain: Bradyzoite-formation deficient protein 1 (2415 aa).

Disordered regions lie at residues 369–392 (WNKP…PEET), 418–481 (HLTS…PYTR), and 761–845 (DGCG…QDTQ). Basic residues predominate over residues 419-429 (LTSRQHPNPRP). The span at 430 to 443 (RMKEEHCGREREVL) shows a compositional bias: basic and acidic residues. Polar residues-rich tracts occupy residues 444–460 (SSEQ…TPAS) and 832–843 (PRTTSSSSYGQD). A Myb-like domain is found at 921–968 (WSAEEDASLAELVSRKGFKWALISSQLTGAFGIPRTGKQCRERWFNHV). In terms of domain architecture, HTH myb-type spans 969–1023 (NPEVKKGDWSAEEDAMILMLQNELGNRWATIAKKLRGRTENAVKNRFISLSNARL). The segment at residues 996–1019 (WATIAKKLRGRTENAVKNRFISLS) is a DNA-binding region (H-T-H motif). Disordered regions lie at residues 1027 to 1050 (RPKR…KSSG), 1098 to 1127 (VSRP…LKNT), 1206 to 1270 (NDER…NGLD), 1319 to 1343 (PACD…AQRQ), 1501 to 1521 (QLWT…QQHE), 1905 to 1932 (VSRD…TSQS), 1959 to 2013 (RVRW…GSTA), and 2161 to 2222 (GTDA…EMQD). Residues 1036–1050 (DCFSNRRTGSGKSSG) are compositionally biased toward polar residues. Basic and acidic residues predominate over residues 1227–1237 (AHEHADIARSD). 2 stretches are compositionally biased toward polar residues: residues 1327–1343 (PQNS…AQRQ) and 1501–1520 (QLWT…NQQH). Residues 1974 to 1985 (SVSSGASNSATT) are compositionally biased toward polar residues. The segment covering 2181-2197 (QAHRRDGHDMQRVQRCD) has biased composition (basic and acidic residues).

It is found in the nucleus. In terms of biological role, master transcription factor that controls the differentiation of acute-stage tachyzoite parasites into chronic-stage bradyzoites, which form intracellular cysts resistant to immune clearance and existing therapies. Sufficient to drive differentiation into bradyzoite stage. Following translation in response to stress conditions, binds to the promoter of many chronic stage-specific genes and promotes their expression, thereby driving differentiation into bradyzoites. This chain is Bradyzoite-formation deficient protein 1, found in Toxoplasma gondii (strain ATCC 50611 / Me49).